Here is a 62-residue protein sequence, read N- to C-terminus: Histone H1.2, embryonic (62 aa).

An H15 domain is found at 1–53 (HVVAAITALKERGGSSMKKQSVFIKKALKSGVEKGTLVQVKGKGASGSFKLGK).

The protein belongs to the histone H1/H5 family.

It localises to the nucleus. It is found in the chromosome. Histones H1 are necessary for the condensation of nucleosome chains into higher-order structures. This Parechinus angulosus (Angulate sea urchin) protein is Histone H1.2, embryonic.